The primary structure comprises 206 residues: Small ribosomal subunit protein uS4 (206 aa).

The S4 RNA-binding domain maps to 96–158 (GRLDNVVYRM…AKKQSRIKAA (63 aa)).

It belongs to the universal ribosomal protein uS4 family. Part of the 30S ribosomal subunit. Contacts protein S5. The interaction surface between S4 and S5 is involved in control of translational fidelity.

In terms of biological role, one of the primary rRNA binding proteins, it binds directly to 16S rRNA where it nucleates assembly of the body of the 30S subunit. Its function is as follows. With S5 and S12 plays an important role in translational accuracy. In Vibrio cholerae serotype O1 (strain ATCC 39541 / Classical Ogawa 395 / O395), this protein is Small ribosomal subunit protein uS4.